Here is a 275-residue protein sequence, read N- to C-terminus: NH(3)-dependent NAD(+) synthetase (275 aa).

Residue 47–54 (GISGGQDS) participates in ATP binding. D53 lines the Mg(2+) pocket. Residue R141 coordinates deamido-NAD(+). Position 161 (T161) interacts with ATP. Residue E166 participates in Mg(2+) binding. Residues K174 and D181 each contribute to the deamido-NAD(+) site. Residues K190 and T212 each contribute to the ATP site. 261 to 262 (HK) is a deamido-NAD(+) binding site.

It belongs to the NAD synthetase family. Homodimer.

It catalyses the reaction deamido-NAD(+) + NH4(+) + ATP = AMP + diphosphate + NAD(+) + H(+). The protein operates within cofactor biosynthesis; NAD(+) biosynthesis; NAD(+) from deamido-NAD(+) (ammonia route): step 1/1. Functionally, catalyzes the ATP-dependent amidation of deamido-NAD to form NAD. Uses ammonia as a nitrogen source. This Lacticaseibacillus paracasei (strain ATCC 334 / BCRC 17002 / CCUG 31169 / CIP 107868 / KCTC 3260 / NRRL B-441) (Lactobacillus paracasei) protein is NH(3)-dependent NAD(+) synthetase.